The chain runs to 359 residues: Ribosomal RNA small subunit methyltransferase H (359 aa).

S-adenosyl-L-methionine-binding positions include 39-41 (AGH), D58, F87, D108, and Q115. The disordered stretch occupies residues 339-359 (IQGSASPGRAKNTARIRTRRG). Residues 350-359 (NTARIRTRRG) show a composition bias toward basic residues.

This sequence belongs to the methyltransferase superfamily. RsmH family.

The protein localises to the cytoplasm. The enzyme catalyses cytidine(1402) in 16S rRNA + S-adenosyl-L-methionine = N(4)-methylcytidine(1402) in 16S rRNA + S-adenosyl-L-homocysteine + H(+). In terms of biological role, specifically methylates the N4 position of cytidine in position 1402 (C1402) of 16S rRNA. The polypeptide is Ribosomal RNA small subunit methyltransferase H (Bifidobacterium longum (strain DJO10A)).